Consider the following 570-residue polypeptide: Formate--tetrahydrofolate ligase (570 aa).

An ATP-binding site is contributed by 65 to 72; the sequence is TPHGEGKT.

Belongs to the formate--tetrahydrofolate ligase family.

It catalyses the reaction (6S)-5,6,7,8-tetrahydrofolate + formate + ATP = (6R)-10-formyltetrahydrofolate + ADP + phosphate. It functions in the pathway one-carbon metabolism; tetrahydrofolate interconversion. The polypeptide is Formate--tetrahydrofolate ligase (Shewanella sp. (strain ANA-3)).